Reading from the N-terminus, the 759-residue chain is Protein YdeP (759 aa).

[4Fe-4S] cluster contacts are provided by C49 and C52.

The protein belongs to the prokaryotic molybdopterin-containing oxidoreductase family. It depends on [4Fe-4S] cluster as a cofactor. Mo-bis(molybdopterin guanine dinucleotide) is required as a cofactor.

Probably involved in acid resistance. The polypeptide is Protein YdeP (ydeP) (Escherichia coli (strain K12)).